We begin with the raw amino-acid sequence, 278 residues long: Dermonecrotic toxin LlSicTox-alphaIII3iii (278 aa).

The active site involves His-5. Positions 25 and 27 each coordinate Mg(2+). Residue His-40 is the Nucleophile of the active site. Cys-44 and Cys-50 are oxidised to a cystine. Asp-84 contacts Mg(2+).

It belongs to the arthropod phospholipase D family. Class I subfamily. It depends on Mg(2+) as a cofactor. In terms of tissue distribution, expressed by the venom gland.

Its subcellular location is the secreted. The enzyme catalyses an N-(acyl)-sphingosylphosphocholine = an N-(acyl)-sphingosyl-1,3-cyclic phosphate + choline. It carries out the reaction an N-(acyl)-sphingosylphosphoethanolamine = an N-(acyl)-sphingosyl-1,3-cyclic phosphate + ethanolamine. It catalyses the reaction a 1-acyl-sn-glycero-3-phosphocholine = a 1-acyl-sn-glycero-2,3-cyclic phosphate + choline. The catalysed reaction is a 1-acyl-sn-glycero-3-phosphoethanolamine = a 1-acyl-sn-glycero-2,3-cyclic phosphate + ethanolamine. Functionally, dermonecrotic toxins cleave the phosphodiester linkage between the phosphate and headgroup of certain phospholipids (sphingolipid and lysolipid substrates), forming an alcohol (often choline) and a cyclic phosphate. This toxin acts on sphingomyelin (SM). It may also act on ceramide phosphoethanolamine (CPE), lysophosphatidylcholine (LPC) and lysophosphatidylethanolamine (LPE), but not on lysophosphatidylserine (LPS), and lysophosphatidylglycerol (LPG). It acts by transphosphatidylation, releasing exclusively cyclic phosphate products as second products. Induces dermonecrosis, hemolysis, increased vascular permeability, edema, inflammatory response, and platelet aggregation. This Loxosceles laeta (South American recluse spider) protein is Dermonecrotic toxin LlSicTox-alphaIII3iii.